Consider the following 114-residue polypeptide: Large ribosomal subunit protein P2v (114 aa).

Positions 74–114 (VASGGGGGAAPAAEPASVESKKKEEEKEESEDDGGMMSLFD) are disordered. Ser-103 bears the Phosphoserine mark.

This sequence belongs to the eukaryotic ribosomal protein P1/P2 family. As to quaternary structure, P1 and P2 exist as dimers at the large ribosomal subunit. Phosphorylated.

Its function is as follows. Plays an important role in the elongation step of protein synthesis. In Arabidopsis thaliana (Mouse-ear cress), this protein is Large ribosomal subunit protein P2v (RPP2E).